The primary structure comprises 120 residues: uncharacterized protein (120 aa).

It localises to the cytoplasm. It is found in the nucleus. This is an uncharacterized protein from Schizosaccharomyces pombe (strain 972 / ATCC 24843) (Fission yeast).